Here is a 299-residue protein sequence, read N- to C-terminus: tRNA pseudouridine synthase B (299 aa).

The active-site Nucleophile is the Asp39.

It belongs to the pseudouridine synthase TruB family. Type 1 subfamily.

It carries out the reaction uridine(55) in tRNA = pseudouridine(55) in tRNA. In terms of biological role, responsible for synthesis of pseudouridine from uracil-55 in the psi GC loop of transfer RNAs. The protein is tRNA pseudouridine synthase B of Syntrophomonas wolfei subsp. wolfei (strain DSM 2245B / Goettingen).